A 105-amino-acid polypeptide reads, in one-letter code: ATP synthase subunit c (105 aa).

3 consecutive transmembrane segments (helical) span residues 3-23 (FLAL…GGMD), 32-52 (SILG…IGMG), and 78-98 (VAMA…IIAI).

The protein belongs to the ATPase C chain family. F-type ATPases have 2 components, F(1) - the catalytic core - and F(0) - the membrane proton channel. F(1) has five subunits: alpha(3), beta(3), gamma(1), delta(1), epsilon(1). F(0) has three main subunits: a(1), b(2) and c(10-14). The alpha and beta chains form an alternating ring which encloses part of the gamma chain. F(1) is attached to F(0) by a central stalk formed by the gamma and epsilon chains, while a peripheral stalk is formed by the delta and b chains.

The protein resides in the cell inner membrane. In terms of biological role, f(1)F(0) ATP synthase produces ATP from ADP in the presence of a proton or sodium gradient. F-type ATPases consist of two structural domains, F(1) containing the extramembraneous catalytic core and F(0) containing the membrane proton channel, linked together by a central stalk and a peripheral stalk. During catalysis, ATP synthesis in the catalytic domain of F(1) is coupled via a rotary mechanism of the central stalk subunits to proton translocation. Its function is as follows. Key component of the F(0) channel; it plays a direct role in translocation across the membrane. A homomeric c-ring of between 10-14 subunits forms the central stalk rotor element with the F(1) delta and epsilon subunits. In Helicobacter acinonychis (strain Sheeba), this protein is ATP synthase subunit c.